The chain runs to 320 residues: tRNA dimethylallyltransferase (320 aa).

Position 16-23 (glycine 16–threonine 23) interacts with ATP. Threonine 18–threonine 23 is a substrate binding site. 3 interaction with substrate tRNA regions span residues aspartate 41–leucine 44, glutamine 165–arginine 169, and arginine 247–arginine 252.

Belongs to the IPP transferase family. Monomer. Requires Mg(2+) as cofactor.

It catalyses the reaction adenosine(37) in tRNA + dimethylallyl diphosphate = N(6)-dimethylallyladenosine(37) in tRNA + diphosphate. In terms of biological role, catalyzes the transfer of a dimethylallyl group onto the adenine at position 37 in tRNAs that read codons beginning with uridine, leading to the formation of N6-(dimethylallyl)adenosine (i(6)A). This is tRNA dimethylallyltransferase from Azoarcus sp. (strain BH72).